A 161-amino-acid polypeptide reads, in one-letter code: Lectin-like protein EP153R (161 aa).

Topologically, residues 1-30 (MFSNKKYIGLIDKYCEKKILDDSSTIKICY) are cytoplasmic. A helical membrane pass occupies residues 31–51 (ILIGILIGTNMITLIYNFIFW). The Extracellular segment spans residues 52-161 (ENYITCNQKD…HVSLLYICSK (110 aa)). Residues Cys-66 and Cys-77 are joined by a disulfide bond. The interval 66–160 (CPKDWVGYNN…KHVSLLYICS (95 aa)) is lectin-like. Asn-89, Asn-98, Asn-104, Asn-110, Asn-116, Asn-130, and Asn-136 each carry an N-linked (GlcNAc...) asparagine; by host glycan. Cys-94 and Cys-159 are disulfide-bonded.

The protein belongs to the asfivirus lectin-like protein family. As to quaternary structure, homodimer.

Its subcellular location is the host endoplasmic reticulum membrane. Functionally, down-regulates MHC-I expression by impairing the appropriate configuration or presentation into the plasma membrane of the latter. Participates in viral hemadsorption, which may help viral spread. Reduces the transactivating activity of host TP53, thus inhibiting apoptosis. Non-essential for virus growth in swine macrophage cell cultures. The protein is Lectin-like protein EP153R of African swine fever virus (isolate Tick/Malawi/Lil 20-1/1983) (ASFV).